The following is a 126-amino-acid chain: UPF0292 protein TSIB_0423 (126 aa).

The 81-residue stretch at 20-100 (NGVILVEGMR…RVDTNTRREL (81 aa)) folds into the Toprim domain. Mg(2+)-binding residues include Glu26, Asp69, and Asp71.

This sequence belongs to the UPF0292 family. The cofactor is Mg(2+).

The polypeptide is UPF0292 protein TSIB_0423 (Thermococcus sibiricus (strain DSM 12597 / MM 739)).